The primary structure comprises 353 residues: (-)-beta-caryophyllene synthase ((2E,6E)-farnesyl diphosphate cyclizing) (353 aa).

Mg(2+)-binding residues include aspartate 85 and aspartate 89. The DDXXD motif signature appears at 85 to 89 (DDQFD). Arginine 179 is a substrate binding site. The Mg(2+) site is built by asparagine 225 and serine 229. Lysine 232 lines the substrate pocket. Glutamate 233 is a Mg(2+) binding site. 320 to 321 (RF) serves as a coordination point for substrate.

This sequence belongs to the terpene synthase family. It depends on Mg(2+) as a cofactor.

The enzyme catalyses (2E,6E)-farnesyl diphosphate = (-)-(E)-beta-caryophyllene + diphosphate. It functions in the pathway secondary metabolite biosynthesis; terpenoid biosynthesis. Its function is as follows. Catalyzes the conversion of (2E,6E)-farnesyl diphosphate (FPP) to yield the bicyclic sesquiterpene (2S,10R)-(-)-(E)-beta-caryophyllene via a probable 1,10-cyclization, which could involve the abstraction of the pyrophosphate from FPP to yield a (E,E)-germacradienyl cation. The polypeptide is (-)-beta-caryophyllene synthase ((2E,6E)-farnesyl diphosphate cyclizing) (ptlA) (Saccharothrix espanaensis (strain ATCC 51144 / DSM 44229 / JCM 9112 / NBRC 15066 / NRRL 15764)).